We begin with the raw amino-acid sequence, 580 residues long: MESSAKRKMDPDNPDEGPSSKVPRPETPVTKATTFLQTMLRKEVNSQLSLGDPLFPELAEESLKTFEQVTEDCNENPEKDVLAELGDILAQAVNHAGIDSSSTGPTLTTHSCSVSSAPLNKPTPTSVAVTNTPLPGASATPELSPRKKPRKTTRPFKVIIKPPVPPAPIMLPLIKQEDIKPEPDFTIQYRNKIIDTAGCIVISDSEEEQGEEVETRGATASSPSTGSGTPRVTSPTHPLSQMNHPPLPDPLGRPDEDSSSSSSSSCSSASDSESESEEMKCSSGGGASVTSSHHGRGGFGGAASSSLLSCGHQSSGGASTGPRKKKSKRISELDNEKVRNIMKDKNTPFCTPNVQTRRGRVKIDEVSRMFRNTNRSLEYKNLPFTIPSMHQVLDEAIKACKTMQVNNKGIQIIYTRNHEVKSEVDAVRCRLGTMCNLALSTPFLMEHTMPVTHPPEVAQRTADACNEGVKAAWSLKELHTHQLCPRSSDYRNMIIHAATPVDLLGALNLCLPLMQKFPKQVMVRIFSTNQGGFMLPIYETAAKAYAVGQFEQPTETPPEDLDTLSLAIEAAIQDLRNKSQ.

Over residues 1 to 11 (MESSAKRKMDP) the composition is skewed to basic and acidic residues. Disordered stretches follow at residues 1-30 (MESSAKRKMDPDNPDEGPSSKVPRPETPVT) and 99-161 (DSSS…VIIK). Positions 99–133 (DSSSTGPTLTTHSCSVSSAPLNKPTPTSVAVTNTP) are enriched in polar residues. Residues K175 and K180 each participate in a glycyl lysine isopeptide (Lys-Gly) (interchain with G-Cter in SUMO) cross-link. Positions 199–202 (CIVI) match the SUMO-interacting motif 1/SIM1 motif. S203 and S205 each carry phosphoserine; by host CK2. The segment at 206–335 (EEEQGEEVET…KSKRISELDN (130 aa)) is disordered. Low complexity-rich tracts occupy residues 216-236 (RGATASSPSTGSGTPRVTSPT), 259-271 (SSSSSSSCSSASD), and 302-317 (AASSSLLSCGHQSSGG). An SUMO-interacting motif 1/SIM2 motif is present at residues 410–413 (IQII). The SUMO-interacting motif 1/SIM3 signature appears at 501-504 (VDLL).

Belongs to the HHV-5 IE2 protein family. In terms of assembly, interacts with host SUMO-modified form of TATA-binding protein (TBP)-associated factor 12/TAF12 in a SIM-dependent manner; this interaction increases the transactivation activity of IE2. Interacts with host CHAF1A. Interacts with several components of the host transcriptional machinery including TBP, TF2B and CREB1. Interacts with host DNA replication licensing factor MCM3. Interacts with host PLSCR1; this interaction inhibits IE2 transactivating activity. Phosphorylated by host CK2 at Ser-203 and Ser-205; leading to enhanced SUMOylation. In terms of processing, SUMOylated; SUMOylation is enhanced when IE2 is phosphorylated by host CK2. The sumoylation is necessary for efficient replication of the virus and thus for the function of this viral transcription factor.

It is found in the host nucleus. Its function is as follows. Stimulates viral early and late gene expression and thus play a crucial role in the regulation of productive infection. Selectively drives host RNA Pol II transcription initiation at a subset of viral early-late and late promoters without substantially affecting Pol II transcription of expressed host genes. Mechanistically, forms a repressive complex at the major immediate-early promoter region involving direct association with host nucleosomes and TBP. Concerning activation, stimulates transcription by binding nearby, but not within, core promoter regions. In addition, activates quiescent cells to reenter the cell cycle and up-regulates several E2F-responsive genes, which are responsible for pushing the cell into S phase. In S-phase, inhibits cellular DNA synthesis and blocks further cell cycle progression. This is Viral transcription factor IE2 (UL122) from Human cytomegalovirus (strain AD169) (HHV-5).